Consider the following 485-residue polypeptide: Argininosuccinate lyase (485 aa).

This sequence belongs to the lyase 1 family. Argininosuccinate lyase subfamily.

The protein resides in the cytoplasm. The enzyme catalyses 2-(N(omega)-L-arginino)succinate = fumarate + L-arginine. The protein operates within amino-acid biosynthesis; L-arginine biosynthesis; L-arginine from L-ornithine and carbamoyl phosphate: step 3/3. The chain is Argininosuccinate lyase from Paracidovorax citrulli (strain AAC00-1) (Acidovorax citrulli).